A 301-amino-acid chain; its full sequence is MTTKHDVKTFQGFILTLQEYWAQQGCAIVQPLDMEVGAGTFHPQTFLRSLGPEPMSSAYVQPSRRPTDGRYGENPNRLQHYYQFQVVLKPSPDNIQELYLGSLQALGIDTQIHDIRFVEDNWESPTLGAWGLGWEVWLNGMEVTQFTYFQQVGGLECSPVTGEITYGLERLAMYIQGVDSVYDLVWTDGPMGRITYGDVFHQNEVEQSTYNFEHADVDFMFALFDQCEKMCQHLLSLEKPLPLPAYEQVMKASHAFNLLDARHAISVTERQRYILRVRTMAKAVAESYYQAREALGFPMCK.

It belongs to the class-II aminoacyl-tRNA synthetase family. As to quaternary structure, tetramer of two alpha and two beta subunits.

It localises to the cytoplasm. It catalyses the reaction tRNA(Gly) + glycine + ATP = glycyl-tRNA(Gly) + AMP + diphosphate. The chain is Glycine--tRNA ligase alpha subunit from Shewanella oneidensis (strain ATCC 700550 / JCM 31522 / CIP 106686 / LMG 19005 / NCIMB 14063 / MR-1).